We begin with the raw amino-acid sequence, 154 residues long: Ribonuclease H (154 aa).

Positions Met1–Ser142 constitute an RNase H type-1 domain. Positions 10, 48, 70, and 134 each coordinate Mg(2+). Residues Cys133 to Pro154 form a disordered region.

This sequence belongs to the RNase H family. In terms of assembly, monomer. Mg(2+) serves as cofactor.

The protein resides in the cytoplasm. It catalyses the reaction Endonucleolytic cleavage to 5'-phosphomonoester.. Its function is as follows. Endonuclease that specifically degrades the RNA of RNA-DNA hybrids. The polypeptide is Ribonuclease H (Aeromonas hydrophila subsp. hydrophila (strain ATCC 7966 / DSM 30187 / BCRC 13018 / CCUG 14551 / JCM 1027 / KCTC 2358 / NCIMB 9240 / NCTC 8049)).